The following is a 125-amino-acid chain: Large ribosomal subunit protein bL17 (125 aa).

This sequence belongs to the bacterial ribosomal protein bL17 family. Part of the 50S ribosomal subunit. Contacts protein L32.

In Blochmanniella floridana, this protein is Large ribosomal subunit protein bL17.